The primary structure comprises 310 residues: Phosphoribosylaminoimidazole-succinocarboxamide synthase (310 aa).

The protein belongs to the SAICAR synthetase family.

It carries out the reaction 5-amino-1-(5-phospho-D-ribosyl)imidazole-4-carboxylate + L-aspartate + ATP = (2S)-2-[5-amino-1-(5-phospho-beta-D-ribosyl)imidazole-4-carboxamido]succinate + ADP + phosphate + 2 H(+). It participates in purine metabolism; IMP biosynthesis via de novo pathway; 5-amino-1-(5-phospho-D-ribosyl)imidazole-4-carboxamide from 5-amino-1-(5-phospho-D-ribosyl)imidazole-4-carboxylate: step 1/2. The polypeptide is Phosphoribosylaminoimidazole-succinocarboxamide synthase (Xanthomonas oryzae pv. oryzae (strain MAFF 311018)).